Consider the following 116-residue polypeptide: Ferredoxin (116 aa).

2 4Fe-4S ferredoxin-type domains span residues 2–31 (TYVVTDECVKCKYTDCVEVCPVDCFYEGER) and 35–64 (FMLVINPDECIDCGVCVPDCPIGAIKPESP). Positions 9 and 17 each coordinate [3Fe-4S] cluster. [4Fe-4S] cluster-binding residues include cysteine 21, cysteine 44, cysteine 47, and cysteine 50. Cysteine 54 serves as a coordination point for [3Fe-4S] cluster.

Requires [4Fe-4S] cluster as cofactor. [3Fe-4S] cluster is required as a cofactor.

Its function is as follows. Ferredoxins are iron-sulfur proteins that transfer electrons in a wide variety of metabolic reactions. The chain is Ferredoxin (fdxA) from Rickettsia conorii (strain ATCC VR-613 / Malish 7).